Reading from the N-terminus, the 254-residue chain is 4-hydroxy-tetrahydrodipicolinate reductase (254 aa).

7–12 (GASGRI) lines the NAD(+) pocket. Arg-35 lines the NADP(+) pocket. NAD(+) is bound by residues 91–93 (GTT) and 115–118 (AHNM). Residue His-147 is the Proton donor/acceptor of the active site. His-148 serves as a coordination point for (S)-2,3,4,5-tetrahydrodipicolinate. Lys-151 functions as the Proton donor in the catalytic mechanism. Residue 157–158 (GT) participates in (S)-2,3,4,5-tetrahydrodipicolinate binding.

The protein belongs to the DapB family.

The protein localises to the cytoplasm. The catalysed reaction is (S)-2,3,4,5-tetrahydrodipicolinate + NAD(+) + H2O = (2S,4S)-4-hydroxy-2,3,4,5-tetrahydrodipicolinate + NADH + H(+). The enzyme catalyses (S)-2,3,4,5-tetrahydrodipicolinate + NADP(+) + H2O = (2S,4S)-4-hydroxy-2,3,4,5-tetrahydrodipicolinate + NADPH + H(+). It participates in amino-acid biosynthesis; L-lysine biosynthesis via DAP pathway; (S)-tetrahydrodipicolinate from L-aspartate: step 4/4. Functionally, catalyzes the conversion of 4-hydroxy-tetrahydrodipicolinate (HTPA) to tetrahydrodipicolinate. The sequence is that of 4-hydroxy-tetrahydrodipicolinate reductase from Helicobacter acinonychis (strain Sheeba).